The following is a 195-amino-acid chain: Probable nicotinate-nucleotide adenylyltransferase (195 aa).

It belongs to the NadD family.

It carries out the reaction nicotinate beta-D-ribonucleotide + ATP + H(+) = deamido-NAD(+) + diphosphate. It participates in cofactor biosynthesis; NAD(+) biosynthesis; deamido-NAD(+) from nicotinate D-ribonucleotide: step 1/1. In terms of biological role, catalyzes the reversible adenylation of nicotinate mononucleotide (NaMN) to nicotinic acid adenine dinucleotide (NaAD). The sequence is that of Probable nicotinate-nucleotide adenylyltransferase from Chlorobaculum tepidum (strain ATCC 49652 / DSM 12025 / NBRC 103806 / TLS) (Chlorobium tepidum).